Consider the following 545-residue polypeptide: Monocarboxylate transporter 8 (545 aa).

The disordered stretch occupies residues Met-1–Phe-98. The residue at position 2 (Ala-2) is an N-acetylalanine. Topologically, residues Ala-2–Glu-102 are cytoplasmic. 2 consecutive repeat copies span residues Pro-29 to Val-50 and Pro-51 to Val-72. A 2 X 22 AA approximate tandem repeats region spans residues Pro-29–Val-72. Residues Pro-33 to Pro-45 are compositionally biased toward acidic residues. The segment covering Glu-46–Leu-70 has biased composition (pro residues). A helical membrane pass occupies residues Gly-103 to Ile-123. At His-124–Ala-149 the chain is on the extracellular side. The chain crosses the membrane as a helical span at residues Ala-150 to Phe-170. The Cytoplasmic segment spans residues Thr-171–Thr-181. The helical transmembrane segment at Thr-182–Leu-202 threads the bilayer. Residues Arg-203–Tyr-204 are Extracellular-facing. A helical transmembrane segment spans residues Phe-205–Ile-225. The Cytoplasmic portion of the chain corresponds to Leu-226–Gly-235. The chain crosses the membrane as a helical span at residues Leu-236–Ile-256. At Lys-257–Lys-264 the chain is on the extracellular side. Residues Leu-265–Thr-285 form a helical membrane-spanning segment. Residues Tyr-286–Arg-328 lie on the Cytoplasmic side of the membrane. A helical transmembrane segment spans residues Ile-329–Met-349. Residues Lys-350–Thr-362 are Extracellular-facing. The helical transmembrane segment at Trp-363–Ile-383 threads the bilayer. Over Ser-384–Lys-392 the chain is Cytoplasmic. A helical transmembrane segment spans residues Ile-393–Cys-413. The Extracellular portion of the chain corresponds to Arg-414–Asp-415. A helical membrane pass occupies residues Phe-416–Ile-436. Topologically, residues Met-437–Ala-453 are cytoplasmic. A helical transmembrane segment spans residues Ile-454–Leu-474. Residues Leu-475–His-483 are Extracellular-facing. Residues Val-484–Pro-504 traverse the membrane as a helical segment. The Cytoplasmic segment spans residues Leu-505–Ile-545. Over residues Glu-514–Asp-529 the composition is skewed to basic and acidic residues. The segment at Glu-514 to Ile-545 is disordered. The residue at position 540 (Thr-540) is a Phosphothreonine.

The protein belongs to the major facilitator superfamily. Monocarboxylate porter (TC 2.A.1.13) family. In terms of assembly, monomer. Homodimer. Homooligomer. Expressed at highest levels in liver, lower levels in brain, kidney and heart (at protein level). Expressed in microvessels of the blood-brain barrier (BBB) (at protein level).

The protein localises to the cell membrane. It is found in the apical cell membrane. The enzyme catalyses 3,3',5-triiodo-L-thyronine(out) = 3,3',5-triiodo-L-thyronine(in). The catalysed reaction is 3,3',5'-triiodo-L-thyronine(out) = 3,3',5'-triiodo-L-thyronine(in). It carries out the reaction L-thyroxine(out) = L-thyroxine(in). It catalyses the reaction 3,3'-diiodo-L-thyronine(out) = 3,3'-diiodo-L-thyronine(in). Its function is as follows. Specific thyroid hormone transmembrane transporter, that mediates both uptake and efflux of thyroid hormone across the cell membrane independently of pH or a Na(+) gradient. Major substrates are the iodothyronines T3 and T4 and to a lesser extent rT3 and 3,3-diiodothyronine (3,3'-T2). Acts as an important mediator of thyroid hormone transport, especially T3, through the blood-brain barrier. This chain is Monocarboxylate transporter 8 (SLC16A2), found in Rattus norvegicus (Rat).